We begin with the raw amino-acid sequence, 141 residues long: Lutropin subunit beta (141 aa).

The first 20 residues, Met1–Ala20, serve as a signal peptide directing secretion. Intrachain disulfides connect Cys29/Cys77, Cys43/Cys92, Cys46/Cys130, Cys54/Cys108, Cys58/Cys110, and Cys113/Cys120. Residue Asn33 is glycosylated (N-linked (GlcNAc...) asparagine).

This sequence belongs to the glycoprotein hormones subunit beta family. Heterodimer of a common alpha chain and a unique beta chain which confers biological specificity to thyrotropin, lutropin, follitropin and gonadotropin.

It is found in the secreted. In terms of biological role, promotes spermatogenesis and ovulation by stimulating the testes and ovaries to synthesize steroids. This chain is Lutropin subunit beta (Lhb), found in Rattus norvegicus (Rat).